A 179-amino-acid chain; its full sequence is Cell division protein ZapC (179 aa).

The protein belongs to the ZapC family. Interacts directly with FtsZ.

The protein resides in the cytoplasm. Functionally, contributes to the efficiency of the cell division process by stabilizing the polymeric form of the cell division protein FtsZ. Acts by promoting interactions between FtsZ protofilaments and suppressing the GTPase activity of FtsZ. This is Cell division protein ZapC from Aliivibrio salmonicida (strain LFI1238) (Vibrio salmonicida (strain LFI1238)).